A 139-amino-acid chain; its full sequence is MPRPIRCRRVEFLPKFKYFSPAQGTSDEVTLKIEELEAIRLKDLEGLMQEECAQKMQVSRQTFQLILEEARKKIADALVHGKAIRIEGGNYVYGKCSYICLNCGKVFDSDYHECPECHSKDIGCTRGRGRCYCFGHGRR.

It belongs to the UPF0251 family.

The chain is UPF0251 protein Csac_0224 from Caldicellulosiruptor saccharolyticus (strain ATCC 43494 / DSM 8903 / Tp8T 6331).